The primary structure comprises 497 residues: GDP-fucose protein O-fucosyltransferase 4 (497 aa).

At 1-6 the chain is on the cytoplasmic side; it reads MACRRR. A helical; Signal-anchor for type II membrane protein membrane pass occupies residues 7 to 27; that stretch reads LLPCAGLGLFGVLCWVWVSFA. The Lumenal segment spans residues 28–497; it reads SFPDDQLPLE…ITERRARGKH (470 aa). N-linked (GlcNAc...) asparagine glycosylation is present at asparagine 169. A disulfide bridge links cysteine 392 with cysteine 395. The segment at 406–427 is disordered; it reads RAHRKDPERNPPPLPKMASNSH. An N-linked (GlcNAc...) asparagine glycan is attached at asparagine 474.

This sequence belongs to the glycosyltransferase 10 family.

It is found in the endoplasmic reticulum membrane. The enzyme catalyses L-threonyl-[protein] + GDP-beta-L-fucose = 3-O-(alpha-L-fucosyl)-L-threonyl-[protein] + GDP + H(+). It carries out the reaction L-seryl-[protein] + GDP-beta-L-fucose = 3-O-(alpha-L-fucosyl)-L-seryl-[protein] + GDP + H(+). Its pathway is protein modification; protein glycosylation. Its function is as follows. Protein O-fucosyltransferase that specifically catalyzes O-fucosylation of serine or threonine residues in EMI domains of target proteins. Attaches fucose through an O-glycosidic linkage. O-fucosylation of EMI domain-containing proteins may be required for facilitating protein folding and secretion. In Oryzias latipes (Japanese rice fish), this protein is GDP-fucose protein O-fucosyltransferase 4 (fut11).